Here is a 188-residue protein sequence, read N- to C-terminus: Protein SSX3 (188 aa).

Residues 20–83 (KIQKAFDDIA…KRVTDFQGND (64 aa)) enclose the KRAB-related domain. The segment at 113-162 (PKKPAEEGNVSKEVPEASGPQNDGKQLCPPGKPTTSEKINMISGPKRGEH) is disordered. The span at 115–127 (KPAEEGNVSKEVP) shows a compositional bias: basic and acidic residues. Ser-123 is modified (phosphoserine).

The protein belongs to the SSX family. As to quaternary structure, interacts with SSX2IP.

Functionally, could act as a modulator of transcription. This chain is Protein SSX3 (SSX3), found in Homo sapiens (Human).